A 1397-amino-acid chain; its full sequence is DNA-directed RNA polymerase subunit beta' (1397 aa).

Residues Cys71, Cys73, Cys86, and Cys89 each contribute to the Zn(2+) site. Asp462, Asp464, and Asp466 together coordinate Mg(2+). Residues Cys811, Cys885, Cys892, and Cys895 each coordinate Zn(2+). The segment at 1368 to 1397 (QNRDDKILEDQGGATPTASTEIKEPAEGAA) is disordered. The span at 1388 to 1397 (EIKEPAEGAA) shows a compositional bias: basic and acidic residues.

Belongs to the RNA polymerase beta' chain family. The RNAP catalytic core consists of 2 alpha, 1 beta, 1 beta' and 1 omega subunit. When a sigma factor is associated with the core the holoenzyme is formed, which can initiate transcription. Requires Mg(2+) as cofactor. Zn(2+) serves as cofactor.

The catalysed reaction is RNA(n) + a ribonucleoside 5'-triphosphate = RNA(n+1) + diphosphate. DNA-dependent RNA polymerase catalyzes the transcription of DNA into RNA using the four ribonucleoside triphosphates as substrates. This Parvibaculum lavamentivorans (strain DS-1 / DSM 13023 / NCIMB 13966) protein is DNA-directed RNA polymerase subunit beta'.